A 242-amino-acid polypeptide reads, in one-letter code: ATP synthase subunit a (242 aa).

6 consecutive transmembrane segments (helical) span residues 29-49 (SSIYMLLASILALTYFYLAFY), 84-104 (FIPLVFSLFIFILFCNLLGMT), 114-134 (IIVTFTLAILVFLIVTIVGFV), 140-160 (FLTLFLPHGTPLWLAPLMIVI), 181-201 (MAGHVLLKVIAGFTVSLMIYL), and 203-223 (FLPIPIMVILIGFEIFVAILQ).

The protein belongs to the ATPase A chain family. F-type ATPases have 2 components, CF(1) - the catalytic core - and CF(0) - the membrane proton channel. CF(1) has five subunits: alpha(3), beta(3), gamma(1), delta(1), epsilon(1). CF(0) has three main subunits: a(1), b(2) and c(9-12). The alpha and beta chains form an alternating ring which encloses part of the gamma chain. CF(1) is attached to CF(0) by a central stalk formed by the gamma and epsilon chains, while a peripheral stalk is formed by the delta and b chains.

Its subcellular location is the cell inner membrane. In terms of biological role, key component of the proton channel; it plays a direct role in the translocation of protons across the membrane. The sequence is that of ATP synthase subunit a from Rickettsia rickettsii (strain Sheila Smith).